The primary structure comprises 161 residues: Nucleotide-binding protein Bpro_1596 (161 aa).

Belongs to the YajQ family.

In terms of biological role, nucleotide-binding protein. The sequence is that of Nucleotide-binding protein Bpro_1596 from Polaromonas sp. (strain JS666 / ATCC BAA-500).